The primary structure comprises 924 residues: Alpha-actinin, sarcomeric (924 aa).

Residues 1 to 250 form an actin-binding region; the sequence is MMMENGLSME…IMTYVSCYYH (250 aa). Calponin-homology (CH) domains follow at residues 34-138 and 147-253; these read KQQK…LRFA and MTAK…HAFQ. 4 Spectrin repeats span residues 251 to 395, 396 to 510, 511 to 631, and 632 to 744; these read AFQG…TVSD, ISNS…RCQR, ICDQ…TAND, and MTRK…TMET. EF-hand domains are found at residues 778–813 and 819–854; these read EQLN…LGYS and QGDL…ESTD. Residues aspartate 791, asparagine 793, threonine 795, arginine 797, and glutamate 802 each coordinate Ca(2+).

Belongs to the alpha-actinin family. In terms of assembly, homodimer; antiparallel. Interacts with Smn; the interaction occurs in adult thoracic tissues. In terms of tissue distribution, larval muscle isoform is expressed in the larval body wall, adult muscles of the head and abdomen and supercontractile muscles of the larva and adult. Adult muscle isoform accumulates within adult fibrillar and tubular muscles.

It localises to the cytoplasm. It is found in the myofibril. The protein resides in the sarcomere. Its subcellular location is the z line. Functionally, F-actin cross-linking protein which is thought to anchor actin to a variety of intracellular structures. This is a bundling protein. The chain is Alpha-actinin, sarcomeric (Actn) from Drosophila melanogaster (Fruit fly).